We begin with the raw amino-acid sequence, 65 residues long: uncharacterized protein (65 aa).

Residues 1 to 16 (MMHVCSLLVSFDVVKS) form the signal peptide.

This is an uncharacterized protein from Saccharomyces cerevisiae (strain ATCC 204508 / S288c) (Baker's yeast).